The sequence spans 89 residues: Small ribosomal subunit protein uS15 (89 aa).

Residues 1-23 form a disordered region; that stretch reads MSLDTTEKQQLINANQTHGTDTG. Residues 8–23 are compositionally biased toward polar residues; that stretch reads KQQLINANQTHGTDTG.

The protein belongs to the universal ribosomal protein uS15 family. Part of the 30S ribosomal subunit. Forms a bridge to the 50S subunit in the 70S ribosome, contacting the 23S rRNA.

In terms of biological role, one of the primary rRNA binding proteins, it binds directly to 16S rRNA where it helps nucleate assembly of the platform of the 30S subunit by binding and bridging several RNA helices of the 16S rRNA. Functionally, forms an intersubunit bridge (bridge B4) with the 23S rRNA of the 50S subunit in the ribosome. The protein is Small ribosomal subunit protein uS15 of Prochlorococcus marinus (strain MIT 9313).